The following is a 242-amino-acid chain: Venom nerve growth factor 2 (242 aa).

An N-terminal signal peptide occupies residues M1–A18. A propeptide spanning residues A19 to R125 is cleaved from the precursor. A compositionally biased stretch (basic and acidic residues) spans D47–D66. Positions D47–G70 are disordered. 3 disulfide bridges follow: C139/C203, C181/C231, and C191/C233.

It belongs to the NGF-beta family. Homodimer; non-covalently linked. As to expression, expressed by the venom gland.

The protein resides in the secreted. Nerve growth factor is important for the development and maintenance of the sympathetic and sensory nervous systems. It stimulates division and differentiation of sympathetic and embryonic sensory neurons as well as basal forebrain cholinergic neurons in the brain. Its relevance in the snake venom is not clear. However, it has been shown to inhibit metalloproteinase-dependent proteolysis of platelet glycoprotein Ib alpha, suggesting a metalloproteinase inhibition to prevent metalloprotease autodigestion and/or protection against prey proteases. Binds a lipid between the two protein chains in the homodimer. The lipid-bound form promotes histamine relase from mouse mast cells, contrary to the lipid-free form. The chain is Venom nerve growth factor 2 from Pseudechis australis (Mulga snake).